The chain runs to 281 residues: N-acetylmuramic acid 6-phosphate etherase (281 aa).

The SIS domain occupies 63 to 226; sequence IVPRMKQGGR…TTSVMIQLGR (164 aa). The active-site Proton donor is Glu-91. Glu-122 is a catalytic residue.

This sequence belongs to the GCKR-like family. MurNAc-6-P etherase subfamily. Homodimer.

It carries out the reaction N-acetyl-D-muramate 6-phosphate + H2O = N-acetyl-D-glucosamine 6-phosphate + (R)-lactate. Its pathway is amino-sugar metabolism; N-acetylmuramate degradation. Its function is as follows. Specifically catalyzes the cleavage of the D-lactyl ether substituent of MurNAc 6-phosphate, producing GlcNAc 6-phosphate and D-lactate. The polypeptide is N-acetylmuramic acid 6-phosphate etherase (Bacteroides fragilis (strain ATCC 25285 / DSM 2151 / CCUG 4856 / JCM 11019 / LMG 10263 / NCTC 9343 / Onslow / VPI 2553 / EN-2)).